A 395-amino-acid polypeptide reads, in one-letter code: S-adenosylmethionine synthase (395 aa).

His-16 lines the ATP pocket. Asp-18 is a binding site for Mg(2+). A K(+)-binding site is contributed by Glu-44. 2 residues coordinate L-methionine: Glu-57 and Gln-100. The flexible loop stretch occupies residues 100-110 (QSPDIAQGVDD). ATP-binding positions include 174 to 176 (DAK), 241 to 242 (RF), Asp-250, 256 to 257 (RK), Ala-273, and Lys-277. Asp-250 contacts L-methionine. Lys-281 contacts L-methionine.

Belongs to the AdoMet synthase family. As to quaternary structure, homotetramer; dimer of dimers. Requires Mg(2+) as cofactor. K(+) serves as cofactor.

Its subcellular location is the cytoplasm. The catalysed reaction is L-methionine + ATP + H2O = S-adenosyl-L-methionine + phosphate + diphosphate. The protein operates within amino-acid biosynthesis; S-adenosyl-L-methionine biosynthesis; S-adenosyl-L-methionine from L-methionine: step 1/1. In terms of biological role, catalyzes the formation of S-adenosylmethionine (AdoMet) from methionine and ATP. The overall synthetic reaction is composed of two sequential steps, AdoMet formation and the subsequent tripolyphosphate hydrolysis which occurs prior to release of AdoMet from the enzyme. This Limosilactobacillus reuteri (strain DSM 20016) (Lactobacillus reuteri) protein is S-adenosylmethionine synthase.